Consider the following 262-residue polypeptide: GDT1-like protein C186.05c (262 aa).

The next 5 membrane-spanning stretches (helical) occupy residues 31-51 (ISMI…ALLA), 57-77 (ASVF…AVLV), 83-103 (FLFP…IFGV), 208-228 (VLDV…VAVI), and 242-262 (VLFF…FQGF).

This sequence belongs to the GDT1 family.

Its subcellular location is the endoplasmic reticulum membrane. The sequence is that of GDT1-like protein C186.05c from Schizosaccharomyces pombe (strain 972 / ATCC 24843) (Fission yeast).